The following is a 496-amino-acid chain: Glycerol kinase (496 aa).

Thr12 is an ADP binding site. ATP contacts are provided by Thr12, Thr13, and Ser14. Thr12 contacts sn-glycerol 3-phosphate. Arg16 contacts ADP. Sn-glycerol 3-phosphate-binding residues include Arg82, Glu83, Tyr134, and Asp244. Arg82, Glu83, Tyr134, Asp244, and Gln245 together coordinate glycerol. 2 residues coordinate ADP: Thr266 and Gly309. Thr266, Gly309, Gln313, and Gly410 together coordinate ATP. The ADP site is built by Gly410 and Asn414.

This sequence belongs to the FGGY kinase family.

It carries out the reaction glycerol + ATP = sn-glycerol 3-phosphate + ADP + H(+). It functions in the pathway polyol metabolism; glycerol degradation via glycerol kinase pathway; sn-glycerol 3-phosphate from glycerol: step 1/1. Its activity is regulated as follows. Inhibited by fructose 1,6-bisphosphate (FBP). Its function is as follows. Key enzyme in the regulation of glycerol uptake and metabolism. Catalyzes the phosphorylation of glycerol to yield sn-glycerol 3-phosphate. In Treponema denticola (strain ATCC 35405 / DSM 14222 / CIP 103919 / JCM 8153 / KCTC 15104), this protein is Glycerol kinase.